The sequence spans 210 residues: Probable GTP-binding protein EngB (210 aa).

Residues 25–199 form the EngB-type G domain; the sequence is TGIEVAFAGR…RQKLDSWFNE (175 aa). GTP-binding positions include 33–40, 60–64, 78–81, 145–148, and 178–180; these read GRSNAGKS, GRTQL, DLPG, TKAD, and FSS. Mg(2+) contacts are provided by serine 40 and threonine 62.

The protein belongs to the TRAFAC class TrmE-Era-EngA-EngB-Septin-like GTPase superfamily. EngB GTPase family. Requires Mg(2+) as cofactor.

In terms of biological role, necessary for normal cell division and for the maintenance of normal septation. The protein is Probable GTP-binding protein EngB of Klebsiella pneumoniae (strain 342).